The following is a 114-amino-acid chain: Holo-[acyl-carrier-protein] synthase (114 aa).

Mg(2+) contacts are provided by Asp-5 and Glu-50.

This sequence belongs to the P-Pant transferase superfamily. AcpS family. Mg(2+) is required as a cofactor.

Its subcellular location is the cytoplasm. The catalysed reaction is apo-[ACP] + CoA = holo-[ACP] + adenosine 3',5'-bisphosphate + H(+). Functionally, transfers the 4'-phosphopantetheine moiety from coenzyme A to a Ser of acyl-carrier-protein. This Campylobacter curvus (strain 525.92) protein is Holo-[acyl-carrier-protein] synthase.